A 336-amino-acid chain; its full sequence is Zinc finger protein GFI1 homolog pag-3 (336 aa).

C2H2-type zinc fingers lie at residues 126–148 (FHCQ…QQVH), 154–176 (FECK…LLIH), 182–204 (YPCE…TYIH), 210–232 (HKCT…TRKH), and 238–260 (FACD…RESH). The tract at residues 253–290 (RRRHRESHHPGHPEECVSASQISSDLSPKGYMTPPTSN) is disordered.

May interact with transcription factor unc-3. In terms of tissue distribution, expressed in the BDU neurons, the touch neurons, the VA, VB and VC motor neurons, two AVF interneurons and unidentified neurons of the retrovesicular ganglion (at protein level).

The protein localises to the nucleus. Its subcellular location is the cell projection. It localises to the axon. It is found in the perikaryon. In terms of biological role, transcription factor. Plays a role in the determination of neuroblast cell fate and neuronal differentiation. Negatively modulates expression of several components of dense-core vesicles (DCVs), thereby, in a DCV membrane protein ida-1-dependent manner, regulating neurosecretion. Negatively modulates the transcription of its own gene, the mechanosensory gene mec-3, and also other touch neuron-specific genes in the BDU neurons; required for coordinated movement. Required to determine the identity of BDU sensory neurons in concert with transcription factor unc-86, regulating expression of a number of genes, including transcription factors ceh-14 and ahr-1, neuropeptides flp-10, nlp-1 and nlp-15, and tyramine receptor-encoding ser-2. Acts in concert with non-canonical WNT signaling to negatively modulate transcription of mec-3 gene in BDU neurons. May act in concert with transcription factor unc-3 in motor neuron fate determination. May play a role programmed cell death. The sequence is that of Zinc finger protein GFI1 homolog pag-3 from Caenorhabditis elegans.